The primary structure comprises 151 residues: uncharacterized protein (151 aa).

Residues 130 to 151 (REIPRTEPDPETTPDNSYRNYL) form a disordered region.

This is an uncharacterized protein from Enterobacteria phage P4 (Bacteriophage P4).